Reading from the N-terminus, the 65-residue chain is Large ribosomal subunit protein bL35 (65 aa).

This sequence belongs to the bacterial ribosomal protein bL35 family.

This Synechococcus sp. (strain WH7803) protein is Large ribosomal subunit protein bL35.